The chain runs to 311 residues: DNA-directed RNA polymerase subunit alpha (311 aa).

Positions 1–227 are alpha N-terminal domain (alpha-NTD); the sequence is MAQFQIECVE…NLFCSLRNLD (227 aa). The segment at 242–311 is alpha C-terminal domain (alpha-CTD); that stretch reads ISQVLIEELQ…GISLPKEKTD (70 aa).

The protein belongs to the RNA polymerase alpha chain family. In terms of assembly, in plastids the minimal PEP RNA polymerase catalytic core is composed of four subunits: alpha, beta, beta', and beta''. When a (nuclear-encoded) sigma factor is associated with the core the holoenzyme is formed, which can initiate transcription.

The protein localises to the plastid. It localises to the chloroplast. The enzyme catalyses RNA(n) + a ribonucleoside 5'-triphosphate = RNA(n+1) + diphosphate. In terms of biological role, DNA-dependent RNA polymerase catalyzes the transcription of DNA into RNA using the four ribonucleoside triphosphates as substrates. The polypeptide is DNA-directed RNA polymerase subunit alpha (Porphyra purpurea (Red seaweed)).